The primary structure comprises 899 residues: Solute carrier family 12 member 9 (899 aa).

Over 1-44 the chain is Cytoplasmic; it reads MTSESSPLLHYRLFSVSDGGLGPPDSSPIMTDAVTVGTGPTQRK. Residues 45 to 65 traverse the membrane as a helical segment; that stretch reads LSTFFGVVVPTVLSMFSIVVF. Over 66–80 the chain is Extracellular; sequence MRIGFVVGHAGLLQS. The chain crosses the membrane as a helical span at residues 81-101; sequence LLMLFVAYVIIWLTVLSVCAI. Residues 102 to 127 are Cytoplasmic-facing; the sequence is STNGAVQGGGAYFMISRTLGPEFGGS. A helical membrane pass occupies residues 128-148; that stretch reads IGLMFYLANVFACGVYVLGLV. Topologically, residues 149–176 are extracellular; it reads EAVLDVFGRDPSDVTDSLRSLPQGYGYS. Residues 177–197 form a helical membrane-spanning segment; it reads FLYASIILLLCMAICLVGASI. Residues 198-202 lie on the Cytoplasmic side of the membrane; the sequence is YSQAS. The chain crosses the membrane as a helical span at residues 203–223; sequence FFIFLLVFVVLLTILISFLAV. Topologically, residues 224–266 are extracellular; that stretch reads RPLTVSIRHGGNVTMTGVYTGINSSTLHNNLQADYSLDYTTGN. N-linked (GlcNAc...) asparagine glycosylation is found at Asn235 and Asn246. A helical transmembrane segment spans residues 267 to 287; that stretch reads LMNFATVFAVMFNGCTGIMAG. Residues 288–304 are Cytoplasmic-facing; sequence CNLSGELKQPSRSIPMG. The chain crosses the membrane as a helical span at residues 305-325; that stretch reads TIIAVIITFFVYLILFIFTAF. Residues 326–347 are Extracellular-facing; the sequence is TCDRTLLREDYGFFRSINIWPP. A helical transmembrane segment spans residues 348 to 368; sequence FVLIGVYATSLSASMSTLIGA. Residues 369 to 393 lie on the Cytoplasmic side of the membrane; it reads SRILHALAKDDLFGVLLAPAKLVSK. Residues 394-414 traverse the membrane as a helical segment; that stretch reads GGNPWGAVVYTWALVQLVLLA. At 415-419 the chain is on the extracellular side; sequence GKLNT. Residues 420 to 440 form a helical membrane-spanning segment; sequence IAGIVTVFYLIAYAAIDLACL. Residues 441–469 are Cytoplasmic-facing; that stretch reads ALEWASAPNFRPTFRFFSWHTCLLGILSS. The helical transmembrane segment at 470–490 threads the bilayer; it reads LVMMFLINPAYASGSIVLLLL. The Extracellular portion of the chain corresponds to 491–739; the sequence is LLGSIHFRSS…PLDLLRPQAS (249 aa). The helical transmembrane segment at 740-760 threads the bilayer; that stretch reads AYVDVCSLFLLQMACILNMAA. The Cytoplasmic portion of the chain corresponds to 761-899; the sequence is SWRRYQLRVF…GLTPVTCTEL (139 aa).

The protein belongs to the SLC12A transporter family.

Its subcellular location is the cell membrane. It is found in the lysosome membrane. Seems to correspond to a subunit of a multimeric transport system and thus, additional subunits may be required for its function. May play a role in lysosomal ion flux and osmoregulation. This chain is Solute carrier family 12 member 9 (slc12a9), found in Xenopus laevis (African clawed frog).